The following is a 218-amino-acid chain: uncharacterized protein (218 aa).

The protein belongs to the glycosyltransferase 2 family.

This is an uncharacterized protein from Mycobacterium bovis (strain ATCC BAA-935 / AF2122/97).